Reading from the N-terminus, the 479-residue chain is MNRPHSCLSFCWMYFAASGIRAVETANGKYAQKLFSDLFEDYSSALRPVEDTDAVLNVTLQVTLSQIKDMDERNQILTAYLWIRQTWHDAYLTWDRDQYDRLDSIRIPSDLVWRPDIVLYNKADDESSEPVNTNVVLRYDGLITWDSPAITKSSCVVDVTYFPFDSQQCNLTFGSWTYNGNQVDIFNALDSGDLSDFIEDVEWEVHGMPAVKNVISYGCCSEPYPDVTFTLLLKRRSSFYIVNLLIPCVLISFLAPLSFYLPAASGEKVSLGVTILLAMTVFQLMVAEIMPASENVPLIGKYYIATMALITASTALTIMVMNIHFCGAEARPVPHWAKVVILKYMSRILFVYDVGESCLSPRHSQEPEQVTKVYSKLPESNLKTSRNKDLSRKKEVRKLLKNDLGYQGGIPQNTDSYCARYEALTKNIEYIAKCLKDHKATNSKGSEWKKVAKVIDRFFMWIFFAMVFVMTVLIIARAD.

The first 25 residues, 1–25, serve as a signal peptide directing secretion; that stretch reads MNRPHSCLSFCWMYFAASGIRAVET. At 26–237 the chain is on the extracellular side; that stretch reads ANGKYAQKLF…TFTLLLKRRS (212 aa). A glycan (N-linked (GlcNAc...) asparagine) is linked at Asn-57. A disulfide bridge connects residues Cys-155 and Cys-169. An N-linked (GlcNAc...) asparagine glycan is attached at Asn-170. Na(+) is bound by residues Ser-191 and Asp-193. A disulfide bond links Cys-219 and Cys-220. 3 helical membrane passes run 238-262, 269-287, and 302-323; these read SFYI…FYLP, VSLG…LMVA, and YYIA…VMNI. The Cytoplasmic portion of the chain corresponds to 324–457; that stretch reads HFCGAEARPV…WKKVAKVIDR (134 aa). A helical membrane pass occupies residues 458 to 476; that stretch reads FFMWIFFAMVFVMTVLIIA.

It belongs to the ligand-gated ion channel (TC 1.A.9) family. Acetylcholine receptor (TC 1.A.9.1) subfamily. Alpha-9/CHRNA9 sub-subfamily. Forms homo- or heterooligomeric channels in conjunction with CHRNA10. The native outer hair cell receptor may be composed of CHRNA9:CHRNA10 heterooligomers. Found in the stoichiometric form (CHRNA9)2:(CHRNA10)3. Detected in the nasal epithelium, in the outer hair cells of the cochlea, in the pars tuberalis of the hypophysis, and in the developing muscle of the tongue. Also expressed in the neurons of dorsal root ganglia.

The protein resides in the synaptic cell membrane. The protein localises to the cell membrane. The enzyme catalyses Ca(2+)(in) = Ca(2+)(out). It carries out the reaction Mg(2+)(in) = Mg(2+)(out). It catalyses the reaction K(+)(in) = K(+)(out). The catalysed reaction is Na(+)(in) = Na(+)(out). Its activity is regulated as follows. Activated by a myriad of ligands such as acetylcholine. AChR activity is inhibited by the antagonist alpha-conotoxins RgIA and GeXXA, small disulfide-constrained peptides from cone snails. Functionally, component of neuronal acetylcholine receptors (nAChRs) that function as pentameric, ligand-gated cation channels with high calcium permeability among other activities. nAChRs are excitatory neurotrasnmitter receptors formed by a collection of nAChR subunits known to mediate synaptic transmission in the nervous system and the neuromuscular junction. Each nAchR subunit confers differential attributes to channel properties, including activation, deactivation and desensitization kinetics, pH sensitivity, cation permeability, and binding to allosteric modulators. Forms either homopentamers or heteropentamers with CHRNA10. Expressed in the inner ear, in sympathetic neurons and in other non-neuronal cells, such as skin keratinocytes and lymphocytes. nAChR formed by CHRNA9:CHRNA10 mediate central nervous system control of auditory and vestibular sensory processing. The channel is permeable to a range of divalent cations including calcium, the influx of which may activate a potassium current which hyperpolarizes the cell membrane. In the ear, mediates synaptic transmission between efferent olivocochlear fibers and hair cells of the cochlea, this may lead to a reduction in basilar membrane motion, altering the activity of auditory nerve fibers and reducing the range of dynamic hearing. This may protect against acoustic trauma. May also regulate keratinocyte adhesion. This is Neuronal acetylcholine receptor subunit alpha-9 (Chrna9) from Rattus norvegicus (Rat).